A 242-amino-acid chain; its full sequence is 1-(5-phosphoribosyl)-5-[(5-phosphoribosylamino)methylideneamino] imidazole-4-carboxamide isomerase (242 aa).

The active-site Proton acceptor is D8. D129 functions as the Proton donor in the catalytic mechanism.

The protein belongs to the HisA/HisF family.

It is found in the cytoplasm. The enzyme catalyses 1-(5-phospho-beta-D-ribosyl)-5-[(5-phospho-beta-D-ribosylamino)methylideneamino]imidazole-4-carboxamide = 5-[(5-phospho-1-deoxy-D-ribulos-1-ylimino)methylamino]-1-(5-phospho-beta-D-ribosyl)imidazole-4-carboxamide. Its pathway is amino-acid biosynthesis; L-histidine biosynthesis; L-histidine from 5-phospho-alpha-D-ribose 1-diphosphate: step 4/9. The sequence is that of 1-(5-phosphoribosyl)-5-[(5-phosphoribosylamino)methylideneamino] imidazole-4-carboxamide isomerase from Clostridium botulinum (strain Langeland / NCTC 10281 / Type F).